A 319-amino-acid chain; its full sequence is Na(+)-translocating NADH-quinone reductase subunit C (319 aa).

A helical transmembrane segment spans residues Trp-14–Val-34. Residue Thr-283 is modified to FMN phosphoryl threonine.

This sequence belongs to the NqrC family. As to quaternary structure, composed of six subunits; NqrA, NqrB, NqrC, NqrD, NqrE and NqrF. FMN serves as cofactor.

It is found in the cell inner membrane. The enzyme catalyses a ubiquinone + n Na(+)(in) + NADH + H(+) = a ubiquinol + n Na(+)(out) + NAD(+). Its function is as follows. NQR complex catalyzes the reduction of ubiquinone-1 to ubiquinol by two successive reactions, coupled with the transport of Na(+) ions from the cytoplasm to the periplasm. NqrA to NqrE are probably involved in the second step, the conversion of ubisemiquinone to ubiquinol. The chain is Na(+)-translocating NADH-quinone reductase subunit C from Chlamydia caviae (strain ATCC VR-813 / DSM 19441 / 03DC25 / GPIC) (Chlamydophila caviae).